An 89-amino-acid chain; its full sequence is UPF0147 protein STK_04605 (89 aa).

The protein belongs to the UPF0147 family.

The sequence is that of UPF0147 protein STK_04605 from Sulfurisphaera tokodaii (strain DSM 16993 / JCM 10545 / NBRC 100140 / 7) (Sulfolobus tokodaii).